Here is a 1120-residue protein sequence, read N- to C-terminus: Hachiman protein HamB (1120 aa).

A Helicase ATP-binding domain is found at aspartate 278–arginine 452. Methionine 291 to threonine 298 provides a ligand contact to ATP. Positions aspartate 395–histidine 398 match the DEAH box motif. The 190-residue stretch at alanine 521–tyrosine 710 folds into the Helicase C-terminal domain.

It belongs to the helicase family.

Functionally, component of antiviral defense system Hachiman, composed of HamA and HamB. Expression of Hachiman in B.subtilis (strain BEST7003) confers resistance to phages phi105, phi29, phi3T, rho14, SBSphiJ, SpBeta and SPR. Probably a helicase. The chain is Hachiman protein HamB from Bacillus cereus.